A 594-amino-acid chain; its full sequence is F-box/LRR-repeat protein At3g58980 (594 aa).

The F-box domain occupies 1–49 (MDRISNLPNEIICHIVSFLSAKEAAFASILSKRWRNLFTIVIKLQFDDS). LRR repeat units follow at residues 103–125 (ILDLKLDICAGRRYSLPLEVFTC), 128–151 (LVKLELGSDFGGFVVDLVPEDAFL), 152–174 (PALETLLLNYIRFKDLRRCAFEK), 203–218 (SPTLERLTISHVDLYE), 219–242 (CEFTRINLDTPNLTYLELSDAVPD), 249–272 (LDSLVEVKLDLTLMVDHKYHGYVD), 288–314 (LRNVEIMNLQSPNTFQAFSYFHEAIPV), 315–339 (FKNLYHLTITNNDTVIGFCWEFLPF), 344–369 (CPNLKTLVIDGPLHYNEDRPKSVCHC), 403–414 (LEKLSGLKLVKL), 415–437 (HSLTRFGSDKKKLLMLPRASSKC), 450–474 (LPSLKTLILDSVKFYDRCGCCAFQK), 503–518 (SQTLERLTIDHRYWAE), 519–541 (HNLESFTFDTPSLTYLDYNAHVP), and 584–594 (LRNVEILRLWM).

The protein is F-box/LRR-repeat protein At3g58980 of Arabidopsis thaliana (Mouse-ear cress).